The chain runs to 512 residues: Ribonuclease Y (512 aa).

Residues 2-22 (VGMYIIIPIVTFIIGGLLAWL) traverse the membrane as a helical segment. The KH domain occupies 202-262 (SITVFHIESD…VRREIARLAL (61 aa)). The region spanning 328 to 421 (LLQHARETAN…VQVCDAISGA (94 aa)) is the HD domain.

Belongs to the RNase Y family.

Its subcellular location is the cell membrane. In terms of biological role, endoribonuclease that initiates mRNA decay. This is Ribonuclease Y from Parabacteroides distasonis (strain ATCC 8503 / DSM 20701 / CIP 104284 / JCM 5825 / NCTC 11152).